The sequence spans 148 residues: Arginine repressor (148 aa).

The protein belongs to the ArgR family.

It is found in the cytoplasm. It participates in amino-acid biosynthesis; L-arginine biosynthesis [regulation]. In terms of biological role, regulates arginine biosynthesis genes. This Chlorobium phaeovibrioides (strain DSM 265 / 1930) (Prosthecochloris vibrioformis (strain DSM 265)) protein is Arginine repressor.